The sequence spans 328 residues: GMP reductase (328 aa).

The active-site Thioimidate intermediate is Cys176. Residue 205–228 (IIADGGIRTHGDIAKSIRFGASMI) coordinates NADP(+).

Belongs to the IMPDH/GMPR family. GuaC type 2 subfamily.

The catalysed reaction is IMP + NH4(+) + NADP(+) = GMP + NADPH + 2 H(+). Catalyzes the irreversible NADPH-dependent deamination of GMP to IMP. It functions in the conversion of nucleobase, nucleoside and nucleotide derivatives of G to A nucleotides, and in maintaining the intracellular balance of A and G nucleotides. This chain is GMP reductase, found in Streptococcus pneumoniae (strain P1031).